A 1853-amino-acid chain; its full sequence is DNA-directed RNA polymerase II subunit RPB1 (1853 aa).

8 residues coordinate Zn(2+): C66, C69, C76, H79, C106, C109, C149, and C177. The lid loop stretch occupies residues 256-268; the sequence is PAVVTFGSAKNQD. The segment at 314-331 is rudder loop; it reads NCIPGLPTATQKGGRPLK. Mg(2+) is bound by residues D489, D491, and D493. Residues 827-839 form a bridging helix region; that stretch reads PSEFFFHAMGGRE. A Glycyl lysine isopeptide (Lys-Gly) (interchain with G-Cter in ubiquitin) cross-link involves residue K1260. 2 disordered regions span residues 1520–1568 and 1589–1853; these read PWSP…PRTP and SPHY…DPQN. Composition is skewed to low complexity over residues 1589-1811 and 1821-1853; these read SPHY…TPSP and YSPS…DPQN. Tandem repeats lie at residues 1592–1598, 1599–1605, 1616–1622, 1623–1629, 1630–1636, 1637–1643, 1644–1650, 1651–1657, 1658–1664, 1665–1671, 1679–1685, 1686–1692, 1693–1699, 1700–1706, 1707–1713, 1717–1723, 1724–1730, 1731–1737, 1752–1758, 1759–1765, 1779–1785, 1786–1792, 1800–1806, 1821–1827, 1828–1834, and 1842–1848. Positions 1592-1848 are C-terminal domain (CTD); 26 X 7 AA approximate tandem repeats of Y-[ST]-P-[ST]-S-P-[AGKNQRST]; it reads YSPTSPSYSP…SPSYSPSSPT (257 aa).

It belongs to the RNA polymerase beta' chain family. As to quaternary structure, component of the RNA polymerase II (Pol II) complex consisting of 12 subunits. Interacts with sig-7. In terms of processing, the tandem 7 residues repeats in the C-terminal domain (CTD) can be highly phosphorylated. The phosphorylation activates Pol II. Phosphorylation occurs mainly at residues 'Ser-2' and 'Ser-5' of the heptapeptide repeat and starts at the 3- to 4-cell embryonic stage. This phosphorylation also occurs in the early stages of oocyte development and is not detected in oocytes arrested at the meiotic diakinesis stage. In the somatic lineage, phosphorylation at 'Ser-2' is mediated by cdk-12 downstream of cdk-9 whereas in the germline lineage cdk-12 phosphorylates 'Ser-2' independently of cdk-9. Phosphorylation is likely mediated by cdk-7. May be dephosphorylated by fcp-1 in diakinetic oocytes and in 1-cell and 2-cell embryos. Dephosphorylated at 'Ser-5' of the heptapeptide repeat by ssup-72. The phosphorylation state is believed to result from the balanced action of site-specific CTD kinases and phosphatase, and a 'CTD code' that specifies the position of Pol II within the transcription cycle has been proposed. Post-translationally, following transcription stress, the elongating form of RNA polymerase II (RNA pol IIo) is polyubiquitinated via 'Lys-63'-linkages on Lys-1260 at DNA damage sites without leading to degradation: ubiquitination promotes RNA pol IIo backtracking to allow access by the transcription-coupled nucleotide excision repair (TC-NER) machinery. Subsequent DEF1-dependent polyubiquitination by the elongin complex via 'Lys-48'-linkages may lead to proteasome-mediated degradation; presumably at stalled RNA pol II where TC-NER has failed, to halt global transcription and enable 'last resort' DNA repair pathways.

The protein localises to the nucleus. The protein resides in the chromosome. The enzyme catalyses RNA(n) + a ribonucleoside 5'-triphosphate = RNA(n+1) + diphosphate. In terms of biological role, DNA-dependent RNA polymerase catalyzes the transcription of DNA into RNA using the four ribonucleoside triphosphates as substrates. Largest and catalytic component of RNA polymerase II which synthesizes mRNA precursors and many functional non-coding RNAs. Forms the polymerase active center together with the second largest subunit. Pol II is the central component of the basal RNA polymerase II transcription machinery. It is composed of mobile elements that move relative to each other. RPB1 is part of the core element with the central large cleft, the clamp element that moves to open and close the cleft and the jaws that are thought to grab the incoming DNA template. At the start of transcription, a single-stranded DNA template strand of the promoter is positioned within the central active site cleft of Pol II. A bridging helix emanates from RPB1 and crosses the cleft near the catalytic site and is thought to promote translocation of Pol II by acting as a ratchet that moves the RNA-DNA hybrid through the active site by switching from straight to bent conformations at each step of nucleotide addition. During transcription elongation, Pol II moves on the template as the transcript elongates. Elongation is influenced by the phosphorylation status of the C-terminal domain (CTD) of Pol II largest subunit (RPB1), which serves as a platform for assembly of factors that regulate transcription initiation, elongation, termination and mRNA processing. Involved in the transcription of several genes including those involved in embryogenesis. This chain is DNA-directed RNA polymerase II subunit RPB1, found in Caenorhabditis briggsae.